The sequence spans 890 residues: MKSLHWFLHLLIIAFTVLRSVEAQNQAGFISLDCGLVPKETTYTEKSTNITYKSDVDYIDSGLVGKINDAYKTQFQQQVWAVRSFPVGQRNCYNVNLTANNKYLIRGTFVYGNYDGLNQFPSFDLHIGPNKWSSVKILGVTNTSMHEIIHVVPQDSLEVCLVKTGPTTPFISSLEVRPLNNESYLTQSGSLMLFARVYFPSSSSSFIRYDEDIHDRVWNSFTDDETVWISTDLPIDTSNSYDMPQSVMKTAAVPKNASEPWLLWWTLDENTAQSYVYMHFAEVQNLTANETREFNITYNGGLRWFSYLRPPNLSISTIFNPRAVSSSNGIFNFTFAMTGNSTLPPLLNALEIYTVVDILQLETNKDEVSAMMNIKETYGLSKKISWQGDPCAPQLYRWEGLNCSYPDSEGSRIISLNLNGSELTGSITSDISKLTLLTVLDLSNNDLSGDIPTFFAEMKSLKLINLSGNPNLNLTAIPDSLQQRVNSKSLTLILGENLTLTPKKESKKVPMVAIAASVAGVFALLVILAIFFVIKRKNVKAHKSPGPPPLVTPGIVKSETRSSNPSIITRERKITYPEVLKMTNNFERVLGKGGFGTVYHGNLDGAEVAVKMLSHSSAQGYKEFKAEVELLLRVHHRHLVGLVGYCDDGDNLALIYEYMANGDLRENMSGKRGGNVLTWENRMQIAVEAAQGLEYLHNGCRPPMVHRDVKTTNILLNERCGAKLADFGLSRSFPIDGECHVSTVVAGTPGYLDPEYYRTNWLSEKSDVYSFGVVLLEIVTNQPVIDKTRERPHINDWVGFMLTKGDIKSIVDPKLMGDYDTNGAWKIVELALACVNPSSNRRPTMAHVVMELNDCVALENARRQGSEEMYSMGSVDYSLSSTSDFAPGAR.

The first 23 residues, M1–A23, serve as a signal peptide directing secretion. Topologically, residues Q24–A513 are extracellular. Residues N49, N96, N142, N181, N256, N285, N289, N295, N312, N332, N340, N402, and N419 are each glycosylated (N-linked (GlcNAc...) asparagine). LRR repeat units follow at residues R412–T435, L436–M458, and S460–L481. N-linked (GlcNAc...) asparagine glycosylation is found at N465, N473, and N497. The chain crosses the membrane as a helical span at residues I514 to I534. The Cytoplasmic portion of the chain corresponds to K535–R890. Phosphothreonine is present on T575. Residues N584 to V856 enclose the Protein kinase domain. ATP contacts are provided by residues L590–V598 and K611. Phosphotyrosine is present on Y656. D708 (proton acceptor) is an active-site residue. Phosphoserine is present on S742. 2 positions are modified to phosphothreonine: T743 and T748. Y756 carries the phosphotyrosine modification.

Belongs to the protein kinase superfamily. Ser/Thr protein kinase family.

It is found in the membrane. The enzyme catalyses L-seryl-[protein] + ATP = O-phospho-L-seryl-[protein] + ADP + H(+). The catalysed reaction is L-threonyl-[protein] + ATP = O-phospho-L-threonyl-[protein] + ADP + H(+). The protein is Probable LRR receptor-like serine/threonine-protein kinase At1g51860 of Arabidopsis thaliana (Mouse-ear cress).